Reading from the N-terminus, the 671-residue chain is Transcription factor xilB (671 aa).

A DNA-binding region (zn(2)-C6 fungal-type) is located at residues 11–46 (CHSCYTRKQKASESDSICDRQYPCNHCTRRRRPEEC). The tract at residues 48–90 (YGPPPVKVPSCPPVPADQSETQPRPVESARPTRETPVDDSEAH) is disordered. The span at 49–62 (GPPPVKVPSCPPVP) shows a compositional bias: pro residues. Residues 77 to 90 (RPTRETPVDDSEAH) show a composition bias toward basic and acidic residues. A fungal transcription factor domain region spans residues 148 to 593 (PERQIIDFLV…ATLLFARSVQ (446 aa)). Residues 629–650 (WPSLEAGDPYSMPDNFPSMAQD) form a disordered region.

Its subcellular location is the nucleus. Transcription factor; part of the gene cluster that mediates the biosynthesis of the 6-methyl-2-pyrone derivative xylariolide D. May play a role in the regulation of the expression of the highly reducing polyketide synthase xilA and the cytochroe P450 monooxygenase xilC. The sequence is that of Transcription factor xilB from Penicillium rubens (strain ATCC 28089 / DSM 1075 / NRRL 1951 / Wisconsin 54-1255) (Penicillium chrysogenum).